The primary structure comprises 361 residues: Inactive 2'-5'-oligoadenylate synthase 1D (361 aa).

This sequence belongs to the 2-5A synthase family. As to quaternary structure, interacts with OAS1A, the interaction inhibits OAS1A catalytic activity. In terms of tissue distribution, expressed specifically in oocytes (at protein level). Expressed at highest level in ovary with lesser amounts in intestine, brain, thymus lung, kidney, liver and uterus.

It localises to the cytoplasm. Its function is as follows. Does not have 2'-5'-oligoadenylate synthetase activity, but can bind double-stranded RNA. May play a role in the control of female fertility, possibly by binding to and inhibiting OAS1A. The sequence is that of Inactive 2'-5'-oligoadenylate synthase 1D from Mus musculus (Mouse).